The sequence spans 414 residues: 5-aminolevulinate synthase (414 aa).

Residues arginine 22, serine 133, and lysine 152 each coordinate substrate. The pyridoxal 5'-phosphate site is built by serine 185, histidine 213, and threonine 241. Lysine 244 is an active-site residue. At lysine 244 the chain carries N6-(pyridoxal phosphate)lysine. Pyridoxal 5'-phosphate contacts are provided by threonine 273 and threonine 274. Residue threonine 359 participates in substrate binding.

This sequence belongs to the class-II pyridoxal-phosphate-dependent aminotransferase family. In terms of assembly, homodimer. Requires pyridoxal 5'-phosphate as cofactor.

The catalysed reaction is succinyl-CoA + glycine + H(+) = 5-aminolevulinate + CO2 + CoA. Its pathway is porphyrin-containing compound metabolism; protoporphyrin-IX biosynthesis; 5-aminolevulinate from glycine: step 1/1. The sequence is that of 5-aminolevulinate synthase (hemA) from Rickettsia prowazekii (strain Madrid E).